A 273-amino-acid chain; its full sequence is 4-hydroxy-tetrahydrodipicolinate reductase (273 aa).

NAD(+) contacts are provided by residues 12 to 17 (GAGGRM) and E38. Residue R39 coordinates NADP(+). Residues 102–104 (GTT) and 126–129 (AANF) contribute to the NAD(+) site. H159 (proton donor/acceptor) is an active-site residue. H160 contributes to the (S)-2,3,4,5-tetrahydrodipicolinate binding site. Catalysis depends on K163, which acts as the Proton donor. 169–170 (GT) is a binding site for (S)-2,3,4,5-tetrahydrodipicolinate.

The protein belongs to the DapB family. As to quaternary structure, homotetramer.

Its subcellular location is the cytoplasm. The catalysed reaction is (S)-2,3,4,5-tetrahydrodipicolinate + NAD(+) + H2O = (2S,4S)-4-hydroxy-2,3,4,5-tetrahydrodipicolinate + NADH + H(+). It carries out the reaction (S)-2,3,4,5-tetrahydrodipicolinate + NADP(+) + H2O = (2S,4S)-4-hydroxy-2,3,4,5-tetrahydrodipicolinate + NADPH + H(+). It participates in amino-acid biosynthesis; L-lysine biosynthesis via DAP pathway; (S)-tetrahydrodipicolinate from L-aspartate: step 4/4. Functionally, catalyzes the conversion of 4-hydroxy-tetrahydrodipicolinate (HTPA) to tetrahydrodipicolinate. In Yersinia pseudotuberculosis serotype O:1b (strain IP 31758), this protein is 4-hydroxy-tetrahydrodipicolinate reductase.